A 149-amino-acid polypeptide reads, in one-letter code: Transcriptional repressor NrdR (149 aa).

Residues 3–34 (CPFCSENDTKVIDSRLVADGHQVRRRRQCLAC) fold into a zinc finger. Positions 49-139 (PRVIKSNGNR…VYRSFEDVRE (91 aa)) constitute an ATP-cone domain.

Belongs to the NrdR family. Zn(2+) is required as a cofactor.

Its function is as follows. Negatively regulates transcription of bacterial ribonucleotide reductase nrd genes and operons by binding to NrdR-boxes. The sequence is that of Transcriptional repressor NrdR from Vibrio cholerae serotype O1 (strain ATCC 39541 / Classical Ogawa 395 / O395).